We begin with the raw amino-acid sequence, 513 residues long: ATP synthase subunit alpha (513 aa).

Residue 169-176 (GDRQIGKT) coordinates ATP.

It belongs to the ATPase alpha/beta chains family. In terms of assembly, F-type ATPases have 2 components, CF(1) - the catalytic core - and CF(0) - the membrane proton channel. CF(1) has five subunits: alpha(3), beta(3), gamma(1), delta(1), epsilon(1). CF(0) has three main subunits: a(1), b(2) and c(9-12). The alpha and beta chains form an alternating ring which encloses part of the gamma chain. CF(1) is attached to CF(0) by a central stalk formed by the gamma and epsilon chains, while a peripheral stalk is formed by the delta and b chains.

It localises to the cell inner membrane. It carries out the reaction ATP + H2O + 4 H(+)(in) = ADP + phosphate + 5 H(+)(out). Functionally, produces ATP from ADP in the presence of a proton gradient across the membrane. The alpha chain is a regulatory subunit. The chain is ATP synthase subunit alpha from Francisella philomiragia subsp. philomiragia (strain ATCC 25017 / CCUG 19701 / FSC 153 / O#319-036).